A 486-amino-acid chain; its full sequence is Photosystem II CP43 reaction center protein (486 aa).

Residues 1–28 constitute a propeptide that is removed on maturation; that stretch reads MKVFVHGWQHKISHTRILYSLRRFYHVE. 5 helical membrane passes run 82–106, 147–168, 191–213, 268–288, and 304–325; these read LFEV…PHLA, LIGP…RDKN, KALF…RLIN, KPFA…LSYS, and WYNN…ASQA. Glutamate 380 is a binding site for [CaMn4O5] cluster. The chain crosses the membrane as a helical span at residues 460–484; it reads RARAAAAGFEKGINRENEAVLSMRP.

Belongs to the PsbB/PsbC family. PsbC subfamily. As to quaternary structure, PSII is composed of 1 copy each of membrane proteins PsbA, PsbB, PsbC, PsbD, PsbE, PsbF, PsbH, PsbI, PsbJ, PsbK, PsbL, PsbM, PsbT, PsbX, PsbY, PsbZ, Psb30/Ycf12, at least 3 peripheral proteins of the oxygen-evolving complex and a large number of cofactors. It forms dimeric complexes. Requires Binds multiple chlorophylls and provides some of the ligands for the Ca-4Mn-5O cluster of the oxygen-evolving complex. It may also provide a ligand for a Cl- that is required for oxygen evolution. PSII binds additional chlorophylls, carotenoids and specific lipids. as cofactor.

It is found in the plastid. It localises to the chloroplast thylakoid membrane. One of the components of the core complex of photosystem II (PSII). It binds chlorophyll and helps catalyze the primary light-induced photochemical processes of PSII. PSII is a light-driven water:plastoquinone oxidoreductase, using light energy to abstract electrons from H(2)O, generating O(2) and a proton gradient subsequently used for ATP formation. This is Photosystem II CP43 reaction center protein from Gracilaria tenuistipitata var. liui (Red alga).